The sequence spans 152 residues: UPF0225 protein KPK_2103 (152 aa).

The protein belongs to the UPF0225 family.

The protein is UPF0225 protein KPK_2103 of Klebsiella pneumoniae (strain 342).